A 356-amino-acid polypeptide reads, in one-letter code: Glutamine synthetase cytosolic isozyme 1-1 (356 aa).

The GS beta-grasp domain occupies 19–99 (IIAEYIWIGG…VMCDCYTPAG (81 aa)). Positions 106–356 (KRHNAAKIFS…IAETTIIWKP (251 aa)) constitute a GS catalytic domain.

Belongs to the glutamine synthetase family. Homooctamer. In terms of tissue distribution, highly expressed in leaf blades, at intermediate levels in spikelets (rice flower) and at lower levels in roots.

Its subcellular location is the cytoplasm. It catalyses the reaction L-glutamate + NH4(+) + ATP = L-glutamine + ADP + phosphate + H(+). High-affinity glutamine synthetase involved in ammonium assimilation. Seems to be a major component of the cytosolic glutamine synthetic pathway in leaf blades. Plays an important role in maintaining carbon and nitrogen metabolic balance during ammonium assimilation in shoots and roots, thus controlling plant growth and development. Plays an important role in maintaining broad range of metabolites and transcripts involved in the maintenance of plant metabolic homeostasis and development of plastid in roots. The sequence is that of Glutamine synthetase cytosolic isozyme 1-1 from Oryza sativa subsp. japonica (Rice).